The primary structure comprises 994 residues: Sarcoplasmic/endoplasmic reticulum calcium ATPase 1 (994 aa).

Residues 1-48 lie on the Cytoplasmic side of the membrane; the sequence is MEAAHSKSTEECLSYFGVSETTGLTPDQVKRHLEKYGPNELPAEEGKS. A helical membrane pass occupies residues 49–69; sequence LWELVVEQFEDLLVRILLLAA. The Lumenal segment spans residues 70 to 89; that stretch reads CISFVLAWFEEGEETVTAFV. The helical transmembrane segment at 90–110 threads the bilayer; it reads EPFVILLILIANAIVGVWQER. Topologically, residues 111–253 are cytoplasmic; the sequence is NAENAIEALK…QDKTPLQQKL (143 aa). The helical transmembrane segment at 254 to 273 threads the bilayer; that stretch reads DEFGEQLSKVISLICVAVWL. Topologically, residues 274 to 295 are lumenal; sequence INIGHFNDPVHGGSWFRGAIYY. Residues 296 to 313 traverse the membrane as a helical segment; sequence FKIAVALAVAAIPEGLPA. Residues Val304, Ala305, Ile307, and Glu309 each contribute to the Ca(2+) site. Residues 314 to 757 lie on the Cytoplasmic side of the membrane; it reads VITTCLALGT…EEGRAIYNNM (444 aa). The 4-aspartylphosphate intermediate role is filled by Asp351. Mg(2+)-binding residues include Asp351 and Thr353. Thr353 contributes to the ATP binding site. Position 441 is a phosphothreonine (Thr441). Positions 442, 489, 515, and 560 each coordinate ATP. A Phosphothreonine modification is found at Thr569. Position 581 is a phosphoserine (Ser581). Residues Thr625, Gly626, and Asp627 each contribute to the ATP site. Ser643 carries the phosphoserine modification. The ATP site is built by Arg678 and Lys684. Residue Asp703 participates in Mg(2+) binding. Residue Asn706 participates in ATP binding. A helical transmembrane segment spans residues 758–777; sequence KQFIRYLISSNVGEVVCIFL. Ca(2+) contacts are provided by Asn768 and Glu771. The Lumenal portion of the chain corresponds to 778 to 787; the sequence is TAALGLPEAL. Residues 788-808 traverse the membrane as a helical segment; sequence IPVQLLWVNLVTDGLPATALG. The interval 788–808 is interaction with PLN; it reads IPVQLLWVNLVTDGLPATALG. The Ca(2+) site is built by Asn796, Thr799, and Asp800. Residues 809–828 lie on the Cytoplasmic side of the membrane; sequence FNPPDLDIMDRPPRSPKEPL. The helical transmembrane segment at 829-851 threads the bilayer; sequence ISGWLFFRYMAIGGYVGAATVGA. Over 852–897 the chain is Lumenal; the sequence is AAWWFLYAEDGPHVSYHQLTHFMQCTEHNPEFDGLDCEVFEAPEPM. An intrachain disulfide couples Cys876 to Cys888. A helical transmembrane segment spans residues 898–917; that stretch reads TMALSVLVTIEMCNALNSLS. A Ca(2+)-binding site is contributed by Glu908. Residues 918 to 930 lie on the Cytoplasmic side of the membrane; the sequence is ENQSLLRMPPWVN. Residues 931–949 form a helical membrane-spanning segment; sequence IWLLGSICLSMSLHFLILY. The interval 932–943 is interaction with PLN; sequence WLLGSICLSMSL. The Lumenal segment spans residues 950–964; sequence VDPLPMIFKLRALDF. The helical transmembrane segment at 965–985 threads the bilayer; that stretch reads TQWLMVLKISLPVIGLDELLK. The Cytoplasmic portion of the chain corresponds to 986–994; it reads FIARNYLEG.

It belongs to the cation transport ATPase (P-type) (TC 3.A.3) family. Type IIA subfamily. As to quaternary structure, interacts with sarcolipin (SLN). Interacts with phospholamban (PLN). Interacts with myoregulin (MRLN). Interacts with DWORF. Interacts with VMP1. The cofactor is Mg(2+).

It localises to the endoplasmic reticulum membrane. The protein resides in the sarcoplasmic reticulum membrane. The enzyme catalyses Ca(2+)(in) + ATP + H2O = Ca(2+)(out) + ADP + phosphate + H(+). Its activity is regulated as follows. Inhibited by sarcolipin (SLN) and myoregulin (MRLN). Has also been shown to be reversibly inhibited by phospholamban (PLN) at low calcium concentrations in vitro. Dephosphorylated PLN decreases the apparent affinity of the ATPase for calcium in vitro and this inhibition is regulated by the phosphorylation of PLN. Enhanced by DWORF; DWORF increases activity by displacing sarcolipin (SLN), phospholamban (PLN) and myoregulin (MRLN). Its function is as follows. Key regulator of striated muscle performance by acting as the major Ca(2+) ATPase responsible for the reuptake of cytosolic Ca(2+) into the sarcoplasmic reticulum. Catalyzes the hydrolysis of ATP coupled with the translocation of calcium from the cytosol to the sarcoplasmic reticulum lumen. Contributes to calcium sequestration involved in muscular excitation/contraction. The chain is Sarcoplasmic/endoplasmic reticulum calcium ATPase 1 (Atp2a1) from Mus musculus (Mouse).